A 398-amino-acid chain; its full sequence is Elongation factor Tu (398 aa).

The tr-type G domain occupies 10–207 (KIHLNVGTIG…ILDKNIPVPN (198 aa)). The segment at 19–26 (GHVDHGKT) is G1. Residue 19-26 (GHVDHGKT) coordinates GTP. Mg(2+) is bound at residue Thr26. The interval 60 to 64 (GITIS) is G2. The G3 stretch occupies residues 81-84 (DCPG). Residues 81–85 (DCPGH) and 136–139 (NKAD) contribute to the GTP site. The G4 stretch occupies residues 136-139 (NKAD). Residues 174-176 (SAL) form a G5 region.

The protein belongs to the TRAFAC class translation factor GTPase superfamily. Classic translation factor GTPase family. EF-Tu/EF-1A subfamily. As to quaternary structure, monomer.

It is found in the cytoplasm. The enzyme catalyses GTP + H2O = GDP + phosphate + H(+). Its function is as follows. GTP hydrolase that promotes the GTP-dependent binding of aminoacyl-tRNA to the A-site of ribosomes during protein biosynthesis. The chain is Elongation factor Tu from Carsonella ruddii (strain PV).